A 960-amino-acid chain; its full sequence is Mast/stem cell growth factor receptor Kit (960 aa).

The N-terminal stretch at 1 to 24 (MEGAHLAWELAHAVLLLSLIPAGG) is a signal peptide. At 25–511 (SVPHEESSLV…IRTHTLFTPL (487 aa)) the chain is on the extracellular side. 5 Ig-like C2-type domains span residues 27–102 (PHEE…VFVK), 111–194 (DSLI…LNVR), 201–294 (PVIT…LKAL), 303–396 (ATMN…VYVK), and 399–497 (PEIL…FNFA). Disulfide bonds link Cys45–Cys87, Cys126–Cys175, Cys141–Cys172, and Cys222–Cys276. N-linked (GlcNAc...) asparagine glycosylation is found at Asn76, Asn135, Asn149, Asn269, Asn286, Asn306, Asn318, Asn338, Asn343, Asn356, Asn453, and Asn469. An intrachain disulfide couples Cys414 to Cys481. Residues 512-532 (LIAFGVAAGLMCIIVMILVYI) form a helical membrane-spanning segment. At 533–960 (YLQKPKYEVQ…TQPLLVREDV (428 aa)) the chain is on the cytoplasmic side. Position 554 (Tyr554) interacts with Mg(2+). A phosphotyrosine; by autocatalysis mark is found at Tyr554 and Tyr556. In terms of domain architecture, Protein kinase spans 575 to 913 (LSFGKTLGAG…QIVQLIEQQL (339 aa)). ATP-binding positions include 582–589 (GAGAFGKV), Lys609, and 657–663 (EYCCYGD). Residues Tyr689 and Tyr706 each carry the phosphotyrosine; by autocatalysis modification. The Proton acceptor role is filled by Asp777. Arg781 contacts ATP. Mg(2+) contacts are provided by Asn782 and Asp795. Phosphotyrosine; by autocatalysis occurs at positions 808 and 921.

The protein belongs to the protein kinase superfamily. Tyr protein kinase family. CSF-1/PDGF receptor subfamily. In terms of processing, ubiquitinated. KIT is rapidly ubiquitinated after autophosphorylation induced by KITLG/SCF binding, leading to internalization and degradation. Autophosphorylated on tyrosine residues. KITLG/SCF binding promotes autophosphorylation. Phosphorylated tyrosine residues are important for interaction with specific binding partners. In terms of tissue distribution, high in the brain and testes and also present in the bursa of Fabricus, heart, kidney, lung, spleen thymus and ovary.

It localises to the cell membrane. It catalyses the reaction L-tyrosyl-[protein] + ATP = O-phospho-L-tyrosyl-[protein] + ADP + H(+). In terms of biological role, tyrosine-protein kinase that acts as a cell-surface receptor for the cytokine KITLG/SCF and plays an essential role in the regulation of cell survival and proliferation, hematopoiesis, stem cell maintenance, gametogenesis, mast cell development, migration and function, and in melanogenesis. In response to KITLG/SCF binding, KIT can activate several signaling pathways. Promotes phosphorylation of PIK3R1, the regulatory subunit of phosphatidylinositol 3-kinase, and subsequent activation of the kinase AKT1. Activated KIT also transmits signals via GRB2 and activation of RAS, RAF1 and the MAP kinases MAPK1/ERK2 and/or MAPK3/ERK1. Promotes activation of STAT family members STAT1, STAT3, STAT5A and STAT5B. KIT promotes activation of PLCG1, leading to the production of the cellular signaling molecules diacylglycerol and inositol 1,4,5-trisphosphate. KIT signaling is modulated by protein phosphatases, and by rapid internalization and degradation of the receptor. The polypeptide is Mast/stem cell growth factor receptor Kit (KIT) (Gallus gallus (Chicken)).